A 401-amino-acid chain; its full sequence is Calreticulin (401 aa).

The first 18 residues, 1–18, serve as a signal peptide directing secretion; sequence MRKELWLGLLLSSQAVLS. Residues Cys-103 and Cys-134 are joined by a disulfide bond. Residues Tyr-107, Lys-109, Tyr-125, and Asp-132 each contribute to the an alpha-D-glucoside site. 7 repeat units span residues 187-198, 206-217, 223-234, 241-252, 256-266, 270-280, and 284-294. A 4 X approximate repeats region spans residues 187-252; sequence KESGTLEEDW…DATQPDDWDE (66 aa). 2 stretches are compositionally biased toward basic and acidic residues: residues 199-214 and 224-236; these read LKPK…KPAD and PEDK…DKEP. A disordered region spans residues 199-263; sequence LKPKTIPDPE…EDGKWEAPMI (65 aa). Positions 246-256 are enriched in acidic residues; that stretch reads QPDDWDEEEDG. The segment at 256–294 is 3 X approximate repeats; it reads GKWEAPMISNPKYKGEWKAKKIPNPAYKGVWKPRDIPNP. Asp-314 contacts an alpha-D-glucoside. A disordered region spans residues 341-401; it reads DQTNGATKDA…EEEDDKKDEL (61 aa). Over residues 348–381 the composition is skewed to basic and acidic residues; sequence KDAEKKAFDSAEADKRKKEEDERKKQEEEEKKTA. Residues 382–401 show a composition bias toward acidic residues; that stretch reads EEDEDDDDEEEEEDDKKDEL. The Prevents secretion from ER signature appears at 398–401; the sequence is KDEL.

Belongs to the calreticulin family.

The protein resides in the endoplasmic reticulum lumen. Its function is as follows. Molecular calcium-binding chaperone promoting folding, oligomeric assembly and quality control in the ER via the calreticulin/calnexin cycle. This lectin may interact transiently with almost all of the monoglucosylated glycoproteins that are synthesized in the ER. The chain is Calreticulin from Euglena gracilis.